A 182-amino-acid polypeptide reads, in one-letter code: P21 prophage-derived terminase small subunit (182 aa).

Residue 31–36 participates in ATP binding; the sequence is SKGSKG.

The protein belongs to the terminase small subunit family. Heterooligomer of gp1 and gp2.

In terms of biological role, involved in the initiation of the phage DNA packaging into the prohead. Processes replicating concatemeric DNA into pieces of unit length with cohesive ends. The sequence is that of P21 prophage-derived terminase small subunit (nohA) from Escherichia coli O6:H1 (strain CFT073 / ATCC 700928 / UPEC).